Here is a 642-residue protein sequence, read N- to C-terminus: Medium-chain-fatty-acid--[acyl-carrier-protein] ligase TtuA (642 aa).

This sequence belongs to the ATP-dependent AMP-binding enzyme family.

It carries out the reaction a medium-chain fatty acid + holo-[ACP] + ATP = a medium-chain fatty acyl-[ACP] + AMP + diphosphate. It catalyses the reaction a medium-chain fatty acid + ATP + H(+) = a medium-chain fatty acyl-AMP + diphosphate. The enzyme catalyses a medium-chain fatty acyl-AMP + holo-[ACP] = a medium-chain fatty acyl-[ACP] + AMP + H(+). The catalysed reaction is decanoate + holo-[ACP] + ATP = decanoyl-[ACP] + AMP + diphosphate. It carries out the reaction decanoate + ATP + H(+) = decanoyl-AMP + diphosphate. It catalyses the reaction decanoyl-AMP + holo-[ACP] = decanoyl-[ACP] + AMP + H(+). Functionally, ligase likely involved in the biosynthesis of a polyyne metabolite. Catalyzes the activation of decanoic acid, followed by the loading of the activated decanoic acid onto the acyl carrier protein TtuC. Decanoic acid is the preferred substrate, but it can also use 10-undecenoic acid and lauric acid. Nonanoic acid and 7-octenoic acid are only weakly activated. The protein is Medium-chain-fatty-acid--[acyl-carrier-protein] ligase TtuA of Teredinibacter turnerae (strain ATCC 39867 / T7901).